The following is a 505-amino-acid chain: Geissoschizine oxidase (505 aa).

A helical membrane pass occupies residues 9–29 (FSSPAFFLLLPFLFLLIKPLI). Cys443 is a binding site for heme.

It belongs to the cytochrome P450 family. Requires heme as cofactor. Mainly expressed in roots.

The protein resides in the membrane. The enzyme catalyses (19E)-geissoschizine + reduced [NADPH--hemoprotein reductase] + O2 = akuammicine + formate + oxidized [NADPH--hemoprotein reductase] + H2O + H(+). The catalysed reaction is (19E)-geissoschizine + reduced [NADPH--hemoprotein reductase] + O2 = 3,17-didehydrostemmadenine + oxidized [NADPH--hemoprotein reductase] + 2 H2O. It carries out the reaction 3,17-didehydrostemmadenine = 17-dehydropreakuammicine. It functions in the pathway alkaloid biosynthesis. Monooxygenase involved in the biosynthesis of curare monoterpene indole alkaloids (MIAs), natural products such as strychnine, a neurotoxic compound used as a pesticide to control rodents, and its pharmacologically active derivatives, including brucine, used to regulate blood pressure. Curare alkaloids act as animal glycine receptor antagonists. Catalyzes the conversion of geissoschizine to dehydropreakuammicine by cyclization, which is spontaneously converted into akuammicine by aromatization. The chain is Geissoschizine oxidase from Strychnos nux-vomica (Poison nut).